The chain runs to 196 residues: 3-isopropylmalate dehydratase small subunit (196 aa).

It belongs to the LeuD family. LeuD type 1 subfamily. In terms of assembly, heterodimer of LeuC and LeuD.

It carries out the reaction (2R,3S)-3-isopropylmalate = (2S)-2-isopropylmalate. It functions in the pathway amino-acid biosynthesis; L-leucine biosynthesis; L-leucine from 3-methyl-2-oxobutanoate: step 2/4. In terms of biological role, catalyzes the isomerization between 2-isopropylmalate and 3-isopropylmalate, via the formation of 2-isopropylmaleate. This is 3-isopropylmalate dehydratase small subunit from Streptococcus gordonii (strain Challis / ATCC 35105 / BCRC 15272 / CH1 / DL1 / V288).